A 352-amino-acid chain; its full sequence is Aspartic protease Bla g 2 (352 aa).

The signal sequence occupies residues Met-1 to Ala-19. Residues Ala-20–Arg-24 constitute a propeptide, removed in mature form. The Peptidase A1 domain occupies Tyr-39–Gly-346. Asp-55 is a catalytic residue. Disulfide bonds link Cys-59-Cys-151, Cys-68-Cys-73, and Cys-75-Cys-136. The N-linked (GlcNAc...) asparagine glycan is linked to Asn-117. Residues His-178 and His-186 each coordinate Zn(2+). Asp-239 is an active-site residue. 2 cysteine pairs are disulfide-bonded: Cys-261–Cys-272 and Cys-276–Cys-309. A glycan (N-linked (GlcNAc...) asparagine) is linked at Asn-295. Positions 326 and 330 each coordinate Zn(2+). A glycan (N-linked (GlcNAc...) asparagine) is linked at Asn-340.

Belongs to the peptidase A1 family. Homodimer.

Its function is as follows. Functions as a digestive enzyme in the cockroach. The protein is Aspartic protease Bla g 2 of Blattella germanica (German cockroach).